We begin with the raw amino-acid sequence, 61 residues long: Double gene block protein 1 (61 aa).

The segment at 15–45 (LAGNRGKQKTRRSVAKDAIRKPASDSTNGGN) is disordered. The interval 17–35 (GNRGKQKTRRSVAKDAIRK) is RNA-binding. A compositionally biased stretch (basic and acidic residues) spans 28–37 (VAKDAIRKPA).

This sequence belongs to the carmovirus double gene block protein 1 family. As to quaternary structure, homodimer.

In terms of biological role, cell-to-cell movement. Displays RNA-binding activity. In Carnation mottle virus (isolate China/Shanghai) (CarMV), this protein is Double gene block protein 1.